The primary structure comprises 372 residues: MHNQAPIQRRKSKRIYVGNVPIGDGAPIAVQSMTNTRTTDVAATVNQIKALERVGADIVRVSVPTMDAAEAFKLIKQQVNVPLVADIHFDYRIALKVAEYGVDCLRINPGNIGSEERIRAVVDCARDKNIPIRIGVNAGSLEKDLQEKYGEPTPQALLESAMRHVDHLDRLNFDQFKVSVKASDVFLAVESYRLLAKQIEQPLHLGITEAGGLRSGSVKSAIGLGLLLSEGIGDTLRVSLAADPVEEIKVGFDILKSLRIRARGINFIACPTCSRQEFDVIGTVNALEQRLEDLITPMDVSIIGCVVNGPGEALVSTLGVTGGNKKSGLYEDGIRKDRLDNNDMIDQLEARIRAKATILDEAQRISIQQIEK.

4 residues coordinate [4Fe-4S] cluster: C270, C273, C305, and E312.

This sequence belongs to the IspG family. [4Fe-4S] cluster is required as a cofactor.

The enzyme catalyses (2E)-4-hydroxy-3-methylbut-2-enyl diphosphate + oxidized [flavodoxin] + H2O + 2 H(+) = 2-C-methyl-D-erythritol 2,4-cyclic diphosphate + reduced [flavodoxin]. It participates in isoprenoid biosynthesis; isopentenyl diphosphate biosynthesis via DXP pathway; isopentenyl diphosphate from 1-deoxy-D-xylulose 5-phosphate: step 5/6. Converts 2C-methyl-D-erythritol 2,4-cyclodiphosphate (ME-2,4cPP) into 1-hydroxy-2-methyl-2-(E)-butenyl 4-diphosphate. The protein is 4-hydroxy-3-methylbut-2-en-1-yl diphosphate synthase (flavodoxin) of Enterobacter sp. (strain 638).